The primary structure comprises 332 residues: Chitin synthase export chaperone (332 aa).

A run of 7 helical transmembrane segments spans residues 52–72 (GAASAMHIIALVMTVVMILHV), 87–107 (FFYLYMLLTFLSLCVDAGVVP), 116–136 (FVAVQAGLASATVTCLMINGF), 158–178 (AAAFVISFLVALATFKTWAGL), 184–204 (IGLFVVLYLLNAVQLFVYVVL), 219–239 (LGDIAFGMFFFVAGQVILYAA), and 249–269 (HYLDGLFFATTCNLLAVMMVY). The tract at residues 309-332 (DDPYGQSTAYDNSYSPSPNRHSRY) is disordered. Residues 313 to 332 (GQSTAYDNSYSPSPNRHSRY) show a composition bias toward polar residues.

This sequence belongs to the CHS7 family. In terms of assembly, interacts with CHS3.

It localises to the endoplasmic reticulum membrane. Chaperone required for the export of the chitin synthase CHS3 from the endoplasmic reticulum. The polypeptide is Chitin synthase export chaperone (CHS7) (Chaetomium globosum (strain ATCC 6205 / CBS 148.51 / DSM 1962 / NBRC 6347 / NRRL 1970) (Soil fungus)).